Here is a 699-residue protein sequence, read N- to C-terminus: Glycine--tRNA ligase beta subunit (699 aa).

It belongs to the class-II aminoacyl-tRNA synthetase family. In terms of assembly, tetramer of two alpha and two beta subunits.

The protein localises to the cytoplasm. The catalysed reaction is tRNA(Gly) + glycine + ATP = glycyl-tRNA(Gly) + AMP + diphosphate. The chain is Glycine--tRNA ligase beta subunit from Methylobacterium radiotolerans (strain ATCC 27329 / DSM 1819 / JCM 2831 / NBRC 15690 / NCIMB 10815 / 0-1).